The following is a 662-amino-acid chain: MTGGRFDFDDGGTYCGGWEEGKAHGHGICTGPKGQGEYSGSWSHGFEVVGGYTWPSGNTYQGYWAQGKRHGLGVETKGKWMYRGEWSHGFKGRYGVRQSLCTPARYEGTWSNGLQDGYGVETYGDGGTYQGQWAGGMRHGYGVRQSVPYGMATVIRSPLRTSLASLRSEQSNGSVLHDAAAAADTPTGTRGGFVLNFHADAELAGKKKGGLFRRGSLLGSMKLRKSESKSSISSKRSSVRSDAAMSRISSSDANSTISFGDVDCDFCPVEDHVDATTTETYMGEWKNDKRNGFGISERSNGMKYEGEWANNKRHGYGCTVFPDGSKEEGKYKNNILVRGIRKQLIPIRNTKTREKVDRAIEGAQRAAAMARTKVEIANSRTAHARAKADAADQAALAARQECDIARAVARELSPDFYQPGPDYIKQRLQEGVDAKENPEEKVPAKPPTPKESPHFYRKGTTPPGSPEASPKYSRSPQPSPPKPAKKQNPSSGARLNQDKRGVAEEQVTAIVNKPLTSKAPTKEVGAAVSQSKYSGRHHVPNPSNGELHSQYHGYYVKLHAPQHPPVDAEDDDRSSPSSSALVHKPSPNKWSPPKSVTKPVAKESKAEPKAKKSELAIPKNPASNDSCPSMEREANSGPNSVMIVLVMLLNIGLAILFVHFLT.

Residues 1 to 640 (MTGGRFDFDD…EREANSGPNS (640 aa)) are Cytoplasmic-facing. 5 MORN repeats span residues 14–36 (YCGG…KGQG), 38–59 (YSGS…SGNT), 60–82 (YQGY…KWMY), 106–128 (YEGT…DGGT), and 129–151 (YQGQ…PYGM). A phosphoserine mark is found at serine 157, serine 216, and serine 220. Positions 228 to 247 (SKSSISSKRSSVRSDAAMSR) are disordered. MORN repeat units lie at residues 281–303 (YMGE…NGMK) and 304–326 (YEGE…DGSK). Positions 432–443 (VDAKENPEEKVP) are enriched in basic and acidic residues. The tract at residues 432 to 634 (VDAKENPEEK…DSCPSMEREA (203 aa)) is disordered. Residue threonine 448 is modified to Phosphothreonine. At serine 452 the chain carries Phosphoserine. Position 461 is a phosphothreonine (threonine 461). Serine 465, serine 469, and serine 475 each carry phosphoserine. The span at 584 to 599 (KPSPNKWSPPKSVTKP) shows a compositional bias: low complexity. The segment covering 600–614 (VAKESKAEPKAKKSE) has biased composition (basic and acidic residues). A helical; Anchor for type IV membrane protein membrane pass occupies residues 641–661 (VMIVLVMLLNIGLAILFVHFL).

The protein belongs to the junctophilin family.

Its subcellular location is the cell membrane. The protein resides in the endoplasmic reticulum membrane. It localises to the sarcoplasmic reticulum membrane. In terms of biological role, junctophilins contribute to the formation of junctional membrane complexes (JMCs) which link the plasma membrane with the endoplasmic or sarcoplasmic reticulum in excitable cells. Provides a structural foundation for functional cross-talk between the cell surface and intracellular calcium release channels. JPH1 contributes to the construction of the skeletal muscle triad by linking the t-tubule (transverse-tubule) and SR (sarcoplasmic reticulum) membranes. This chain is Junctophilin-1 (JPH1), found in Oryctolagus cuniculus (Rabbit).